The following is a 264-amino-acid chain: tRNA pseudouridine synthase A (264 aa).

Catalysis depends on Asp-56, which acts as the Nucleophile. Substrate is bound at residue Tyr-114.

This sequence belongs to the tRNA pseudouridine synthase TruA family. In terms of assembly, homodimer.

The catalysed reaction is uridine(38/39/40) in tRNA = pseudouridine(38/39/40) in tRNA. Functionally, formation of pseudouridine at positions 38, 39 and 40 in the anticodon stem and loop of transfer RNAs. The protein is tRNA pseudouridine synthase A of Buchnera aphidicola subsp. Baizongia pistaciae (strain Bp).